We begin with the raw amino-acid sequence, 262 residues long: Acyl-[acyl-carrier-protein]--UDP-N-acetylglucosamine O-acyltransferase (262 aa).

This sequence belongs to the transferase hexapeptide repeat family. LpxA subfamily. Homotrimer.

Its subcellular location is the cytoplasm. It carries out the reaction a (3R)-hydroxyacyl-[ACP] + UDP-N-acetyl-alpha-D-glucosamine = a UDP-3-O-[(3R)-3-hydroxyacyl]-N-acetyl-alpha-D-glucosamine + holo-[ACP]. It functions in the pathway glycolipid biosynthesis; lipid IV(A) biosynthesis; lipid IV(A) from (3R)-3-hydroxytetradecanoyl-[acyl-carrier-protein] and UDP-N-acetyl-alpha-D-glucosamine: step 1/6. In terms of biological role, involved in the biosynthesis of lipid A, a phosphorylated glycolipid that anchors the lipopolysaccharide to the outer membrane of the cell. This Yersinia pseudotuberculosis serotype O:1b (strain IP 31758) protein is Acyl-[acyl-carrier-protein]--UDP-N-acetylglucosamine O-acyltransferase.